Here is a 222-residue protein sequence, read N- to C-terminus: Cytidylate kinase (222 aa).

7 to 15 (GPAGAGKST) provides a ligand contact to ATP.

The protein belongs to the cytidylate kinase family. Type 1 subfamily.

The protein resides in the cytoplasm. The catalysed reaction is CMP + ATP = CDP + ADP. It carries out the reaction dCMP + ATP = dCDP + ADP. The protein is Cytidylate kinase of Carboxydothermus hydrogenoformans (strain ATCC BAA-161 / DSM 6008 / Z-2901).